Reading from the N-terminus, the 534-residue chain is Probable DNA polymerase epsilon subunit 2 (534 aa).

It belongs to the DNA polymerase epsilon subunit B family. In terms of assembly, consists of four subunits.

The protein resides in the nucleus. In terms of biological role, accessory component of the DNA polymerase epsilon complex. Participates in DNA repair and in chromosomal DNA replication. The sequence is that of Probable DNA polymerase epsilon subunit 2 (pole-2) from Caenorhabditis elegans.